The sequence spans 876 residues: Probable LRR receptor-like protein kinase At1g51890 (876 aa).

Residues 1–19 (MRFLSFLIFVFAVLGLVQA) form the signal peptide. At 20 to 500 (QDQSGFISLD…TGKNSTNVVA (481 aa)) the chain is on the extracellular side. N-linked (GlcNAc...) asparagine glycosylation is found at asparagine 45, asparagine 90, asparagine 138, asparagine 177, asparagine 251, asparagine 259, asparagine 284, asparagine 290, asparagine 327, asparagine 335, asparagine 397, asparagine 412, and asparagine 417. 3 LRR repeats span residues 407-430 (QIIS…SKLT), 431-453 (HLRE…FSDM), and 455-476 (NLTL…ETLQ). N-linked (GlcNAc...) asparagine glycosylation is found at asparagine 455, asparagine 460, asparagine 468, asparagine 481, and asparagine 494. A helical transmembrane segment spans residues 501–521 (IAASVASVFAVLVILAIVFVV). Topologically, residues 522 to 872 (IRKKQRTNEA…FSPSSASDFS (351 aa)) are cytoplasmic. The residue at position 561 (threonine 561) is a Phosphothreonine. One can recognise a Protein kinase domain in the interval 570–842 (KNFERVLGKG…HVVMELNECL (273 aa)). Residues 576 to 584 (LGKGGFGTV) and lysine 597 each bind ATP. At tyrosine 642 the chain carries Phosphotyrosine. Aspartate 694 serves as the catalytic Proton acceptor. Phosphothreonine occurs at positions 729 and 734. At tyrosine 742 the chain carries Phosphotyrosine.

The protein belongs to the protein kinase superfamily. Ser/Thr protein kinase family.

It localises to the cell membrane. The enzyme catalyses L-seryl-[protein] + ATP = O-phospho-L-seryl-[protein] + ADP + H(+). The catalysed reaction is L-threonyl-[protein] + ATP = O-phospho-L-threonyl-[protein] + ADP + H(+). The chain is Probable LRR receptor-like protein kinase At1g51890 from Arabidopsis thaliana (Mouse-ear cress).